Reading from the N-terminus, the 368-residue chain is Transcription factor bHLH30 (368 aa).

Residues 3-30 adopt a coiled-coil conformation; sequence AKKEEEEEEEEDSSEAMNNIQNYQNDLF. The region spanning 173 to 222 is the bHLH domain; that stretch reads AASKSHSEAERRRRERINNHLAKLRSILPNTTKTDKASLLAEVIQHVKEL. A disordered region spans residues 333–368; sequence KSNVEESSSSGNAKRQRMSSHNTITIVEQQQQYNQR. A compositionally biased stretch (polar residues) spans 337–368; the sequence is EESSSSGNAKRQRMSSHNTITIVEQQQQYNQR.

Homodimer. Interacts with LHW.

Its subcellular location is the nucleus. The protein is Transcription factor bHLH30 (BHLH30) of Arabidopsis thaliana (Mouse-ear cress).